The following is a 37-amino-acid chain: Large ribosomal subunit protein bL36 (37 aa).

It belongs to the bacterial ribosomal protein bL36 family.

The chain is Large ribosomal subunit protein bL36 from Prochlorococcus marinus (strain MIT 9313).